We begin with the raw amino-acid sequence, 310 residues long: Malate dehydrogenase (310 aa).

NAD(+)-binding positions include 7–12 (GAGNVG) and D32. R81 and R87 together coordinate substrate. NAD(+) contacts are provided by residues N94 and 117 to 119 (VSN). N119 and R150 together coordinate substrate. The Proton acceptor role is filled by H174.

This sequence belongs to the LDH/MDH superfamily. MDH type 3 family.

The catalysed reaction is (S)-malate + NAD(+) = oxaloacetate + NADH + H(+). In terms of biological role, catalyzes the reversible oxidation of malate to oxaloacetate. In Chlorobium luteolum (strain DSM 273 / BCRC 81028 / 2530) (Pelodictyon luteolum), this protein is Malate dehydrogenase.